We begin with the raw amino-acid sequence, 643 residues long: Phosphomethylpyrimidine synthase (643 aa).

Substrate is bound by residues Asn248, Met277, Tyr306, His342, 362–364, 403–406, and Glu442; these read SRG and DGLR. Residue His446 coordinates Zn(2+). A substrate-binding site is contributed by Tyr469. Position 510 (His510) interacts with Zn(2+). Residues Cys590, Cys593, and Cys598 each coordinate [4Fe-4S] cluster.

It belongs to the ThiC family. In terms of assembly, homodimer. [4Fe-4S] cluster serves as cofactor.

It catalyses the reaction 5-amino-1-(5-phospho-beta-D-ribosyl)imidazole + S-adenosyl-L-methionine = 4-amino-2-methyl-5-(phosphooxymethyl)pyrimidine + CO + 5'-deoxyadenosine + formate + L-methionine + 3 H(+). It functions in the pathway cofactor biosynthesis; thiamine diphosphate biosynthesis. Its function is as follows. Catalyzes the synthesis of the hydroxymethylpyrimidine phosphate (HMP-P) moiety of thiamine from aminoimidazole ribotide (AIR) in a radical S-adenosyl-L-methionine (SAM)-dependent reaction. The polypeptide is Phosphomethylpyrimidine synthase (Burkholderia pseudomallei (strain 1106a)).